The following is a 216-amino-acid chain: Translation initiation factor 6 (216 aa).

It belongs to the eIF-6 family.

In terms of biological role, binds to the 50S ribosomal subunit and prevents its association with the 30S ribosomal subunit to form the 70S initiation complex. The chain is Translation initiation factor 6 from Thermoplasma acidophilum (strain ATCC 25905 / DSM 1728 / JCM 9062 / NBRC 15155 / AMRC-C165).